The chain runs to 361 residues: Putative agmatine deiminase (361 aa).

Catalysis depends on Cys-354, which acts as the Amidino-cysteine intermediate.

This sequence belongs to the agmatine deiminase family.

The catalysed reaction is agmatine + H2O = N-carbamoylputrescine + NH4(+). The chain is Putative agmatine deiminase from Streptococcus pneumoniae (strain 70585).